The sequence spans 1012 residues: RNA-binding protein 26 (1012 aa).

A Glycyl lysine isopeptide (Lys-Gly) (interchain with G-Cter in SUMO2) cross-link involves residue lysine 94. Residues 98–127 adopt a coiled-coil conformation; sequence LQHQEKDIKKEELTKEEEREKKFSRRLNHS. Lysine 106 is covalently cross-linked (Glycyl lysine isopeptide (Lys-Gly) (interchain with G-Cter in SUMO1); alternate). Lysine 106 is covalently cross-linked (Glycyl lysine isopeptide (Lys-Gly) (interchain with G-Cter in SUMO2); alternate). The segment covering 106-118 has biased composition (basic and acidic residues); sequence KKEELTKEEEREK. Positions 106-236 are disordered; that stretch reads KKEELTKEEE…PLENNYTPVS (131 aa). Serine 127 bears the Phosphoserine mark. Positions 134–168 are enriched in basic and acidic residues; that stretch reads RYRDNRSRDERKKDDRSRKRDYDRNPPRRDSYRDR. Over residues 169–186 the composition is skewed to basic residues; it reads YNRRRGRSRSYSRSRSRS. Composition is skewed to basic and acidic residues over residues 187 to 201 and 209 to 227; these read WSKE…DRSR and RSRE…RTDP. A C3H1-type zinc finger spans residues 288–316; that stretch reads PMPKKRCRDYDEKGFCMRGDMCPFDHGSD. Over residues 334–388 the composition is skewed to pro residues; it reads QPPVVEGPPPPGLPPPPPILTPPPVNLRPPVPPPGPLPPSLPPVTGPPPPLPPLQ. Disordered regions lie at residues 334–404 and 465–520; these read QPPV…SSVP and IGLT…NFNR. The span at 394–404 shows a compositional bias: low complexity; it reads APPNSATSSVP. A Phosphoserine modification is found at serine 501. N6-acetyllysine is present on lysine 515. Serine 523 carries the post-translational modification Phosphoserine. The 75-residue stretch at 537–611 folds into the RRM 1 domain; it reads TKLELRKVPP…RFIKVYWHRE (75 aa). Position 621 is a phosphoserine (serine 621). Residues 647–667 form a disordered region; it reads PVPSATTEPAEAQSATSELPQ. Coiled coils occupy residues 724–800 and 828–852; these read DNNE…KSTS and KKMQ…EAAK. The segment at 858–889 is disordered; that stretch reads SGRGRGIHTRGRGTAHGRGRGRGRGRGVPGHA. Residues 862–882 are compositionally biased toward basic residues; that stretch reads RGIHTRGRGTAHGRGRGRGRG. An RRM 2 domain is found at 896 to 965; sequence RALEISAFTE…QDLKLAWNKP (70 aa). A disordered region spans residues 970–1012; sequence SAVDTEEAEPDEEEFQEESLVDDSLLQDDDEEEEDNESRSWRR. Residues 973–1005 are compositionally biased toward acidic residues; that stretch reads DTEEAEPDEEEFQEESLVDDSLLQDDDEEEEDN.

In terms of tissue distribution, expressed in testis and ovary.

Functionally, may be involved in the turnover of nuclear polyadenylated (pA+) RNA. This is RNA-binding protein 26 from Mus musculus (Mouse).